We begin with the raw amino-acid sequence, 341 residues long: UDP-3-O-(3-hydroxymyristoyl)glucosamine N-acyltransferase (341 aa).

The active-site Proton acceptor is H239.

Belongs to the transferase hexapeptide repeat family. LpxD subfamily. In terms of assembly, homotrimer.

The catalysed reaction is a UDP-3-O-[(3R)-3-hydroxyacyl]-alpha-D-glucosamine + a (3R)-hydroxyacyl-[ACP] = a UDP-2-N,3-O-bis[(3R)-3-hydroxyacyl]-alpha-D-glucosamine + holo-[ACP] + H(+). It carries out the reaction UDP-3-O-[(3R)-3-hydroxytetradecanoyl]-alpha-D-glucosamine + (3R)-hydroxytetradecanoyl-[ACP] = UDP-2-N,3-O-bis[(3R)-3-hydroxytetradecanoyl]-alpha-D-glucosamine + holo-[ACP] + H(+). It functions in the pathway glycolipid biosynthesis; lipid IV(A) biosynthesis; lipid IV(A) from (3R)-3-hydroxytetradecanoyl-[acyl-carrier-protein] and UDP-N-acetyl-alpha-D-glucosamine: step 3/6. Catalyzes the N-acylation of UDP-3-O-(hydroxytetradecanoyl)glucosamine using 3-hydroxytetradecanoyl-ACP as the acyl donor. Is involved in the biosynthesis of lipid A, a phosphorylated glycolipid that anchors the lipopolysaccharide to the outer membrane of the cell. This Salmonella paratyphi A (strain ATCC 9150 / SARB42) protein is UDP-3-O-(3-hydroxymyristoyl)glucosamine N-acyltransferase.